The sequence spans 222 residues: Protein-L-isoaspartate O-methyltransferase (222 aa).

The active site involves serine 69.

It belongs to the methyltransferase superfamily. L-isoaspartyl/D-aspartyl protein methyltransferase family.

Its subcellular location is the cytoplasm. It carries out the reaction [protein]-L-isoaspartate + S-adenosyl-L-methionine = [protein]-L-isoaspartate alpha-methyl ester + S-adenosyl-L-homocysteine. Functionally, catalyzes the methyl esterification of L-isoaspartyl residues in peptides and proteins that result from spontaneous decomposition of normal L-aspartyl and L-asparaginyl residues. It plays a role in the repair and/or degradation of damaged proteins. In Nitrosomonas eutropha (strain DSM 101675 / C91 / Nm57), this protein is Protein-L-isoaspartate O-methyltransferase.